A 421-amino-acid polypeptide reads, in one-letter code: Gamma-glutamyl phosphate reductase (421 aa).

This sequence belongs to the gamma-glutamyl phosphate reductase family.

Its subcellular location is the cytoplasm. The enzyme catalyses L-glutamate 5-semialdehyde + phosphate + NADP(+) = L-glutamyl 5-phosphate + NADPH + H(+). The protein operates within amino-acid biosynthesis; L-proline biosynthesis; L-glutamate 5-semialdehyde from L-glutamate: step 2/2. In terms of biological role, catalyzes the NADPH-dependent reduction of L-glutamate 5-phosphate into L-glutamate 5-semialdehyde and phosphate. The product spontaneously undergoes cyclization to form 1-pyrroline-5-carboxylate. In Shewanella pealeana (strain ATCC 700345 / ANG-SQ1), this protein is Gamma-glutamyl phosphate reductase.